The primary structure comprises 150 residues: MKLNELYNNIGAKKNKKRIARGIGSGKGKTAGRGIKGQKSRSGVAIKGFEGGQTPMIKRLPKRGFKCISTKKYNIINIYNIEKALTDGRLSTNNIITKEKLIEIGLINNKNLVKLLSICSDDFASPLSLKLDAYSSKAKYLIEKAGGQLL.

It belongs to the universal ribosomal protein uL15 family. As to quaternary structure, part of the 50S ribosomal subunit.

In terms of biological role, binds to the 23S rRNA. In Rickettsia typhi (strain ATCC VR-144 / Wilmington), this protein is Large ribosomal subunit protein uL15.